A 730-amino-acid polypeptide reads, in one-letter code: Stonin-1 (730 aa).

Disordered stretches follow at residues 1–26 (MYST…KRKD), 38–83 (NGLK…PLST), and 132–159 (SPHV…AGPQ). Low complexity-rich tracts occupy residues 54 to 65 (PSSASSTPLSSP) and 132 to 143 (SPHVSLPSSHSH). In terms of domain architecture, SHD spans 269–402 (GWSFMLRIPE…KLPATAKPKN (134 aa)). The MHD domain maps to 407–710 (EQEICLDIQD…ACYNIQVEIE (304 aa)).

The protein belongs to the Stoned B family.

The protein resides in the cytoplasm. It localises to the membrane. Functionally, may be involved in the endocytic machinery. In Mus musculus (Mouse), this protein is Stonin-1 (Ston1).